Reading from the N-terminus, the 815-residue chain is Phosphate transporter PHO1-2 (815 aa).

Residues 1 to 421 are Cytoplasmic-facing; sequence MVKFSREYEA…QQPRNTHMIT (421 aa). The SPX domain occupies 2–368; the sequence is VKFSREYEAS…EQQRATDLFS (367 aa). Disordered stretches follow at residues 83–108, 166–213, and 242–266; these read SAGQ…STDK, RGLA…LELQ, and AGKK…GGGG. Residues 97–108 show a composition bias toward basic and acidic residues; that stretch reads PDRGELVRSTDK. The segment covering 183–201 has biased composition (low complexity); the sequence is PPSSVHGSSGRYLLSGLSS. A compositionally biased stretch (polar residues) spans 202 to 213; the sequence is PQSMSDGSLELQ. Residues 243 to 254 show a composition bias toward basic and acidic residues; the sequence is GKKDGKTKDGSG. Residues 255–266 show a composition bias toward gly residues; it reads KGRGGGGGGGGG. Residues 422–442 form a helical membrane-spanning segment; the sequence is FLVGLFTGTFVSLFIIYAILA. The Extracellular portion of the chain corresponds to 443 to 458; that stretch reads HVSGIFTSTGNSAYME. Residues 459–479 form a helical membrane-spanning segment; that stretch reads IVYHVFSMFALISLHIFLYGC. Over 480 to 508 the chain is Cytoplasmic; the sequence is NLFMWKNTRINHNFIFDFSSNTALTHRDA. A helical transmembrane segment spans residues 509–529; the sequence is FLMSASIMCTVVAALVINLFL. Topologically, residues 530–538 are extracellular; it reads KNAGVAYAN. The chain crosses the membrane as a helical span at residues 539–559; the sequence is ALPGALLLLSTGVLFCPFDIF. Topologically, residues 560–686 are cytoplasmic; the sequence is YRSTRYCFMR…VRFKYAATPT (127 aa). In terms of domain architecture, EXS spans 624 to 815; that stretch reads TSGQQYKHLA…PLPFRELETD (192 aa). A helical transmembrane segment spans residues 687 to 707; sequence PFWVWMVIISSSGATIYQLYW. The Extracellular segment spans residues 708–734; it reads DFVKDWGFLNPKSKNRWLRNELILKNK. Residues 735 to 751 form a helical membrane-spanning segment; that stretch reads SIYYVSMMLNLALRLAW. The Cytoplasmic portion of the chain corresponds to 752 to 815; the sequence is TESVMKIHIG…PLPFRELETD (64 aa).

This sequence belongs to the SYG1 (TC 2.A.94) family. In terms of tissue distribution, specifically expressed in roots.

The protein localises to the cell membrane. Its function is as follows. Involved in the transfer of inorganic phosphate (Pi) from roots to shoots. In Oryza sativa subsp. japonica (Rice), this protein is Phosphate transporter PHO1-2 (PHO1-2).